We begin with the raw amino-acid sequence, 211 residues long: Large ribosomal subunit protein eL13 (211 aa).

K16 is subject to N6-acetyllysine. A phosphoserine mark is found at S52, S77, and S106. Residues K123 and K145 each participate in a glycyl lysine isopeptide (Lys-Gly) (interchain with G-Cter in SUMO2) cross-link. K174 is covalently cross-linked (Glycyl lysine isopeptide (Lys-Gly) (interchain with G-Cter in SUMO1); alternate). Residues K174 and K177 each participate in a glycyl lysine isopeptide (Lys-Gly) (interchain with G-Cter in SUMO2); alternate cross-link. An N6-acetyllysine; alternate modification is found at K177.

This sequence belongs to the eukaryotic ribosomal protein eL13 family. In terms of assembly, component of the 60S large ribosomal subunit (LSU). Higher levels of expression in benign breast lesions than in carcinomas.

The protein resides in the cytoplasm. Component of the ribosome, a large ribonucleoprotein complex responsible for the synthesis of proteins in the cell. The small ribosomal subunit (SSU) binds messenger RNAs (mRNAs) and translates the encoded message by selecting cognate aminoacyl-transfer RNA (tRNA) molecules. The large subunit (LSU) contains the ribosomal catalytic site termed the peptidyl transferase center (PTC), which catalyzes the formation of peptide bonds, thereby polymerizing the amino acids delivered by tRNAs into a polypeptide chain. The nascent polypeptides leave the ribosome through a tunnel in the LSU and interact with protein factors that function in enzymatic processing, targeting, and the membrane insertion of nascent chains at the exit of the ribosomal tunnel. As part of the LSU, it is probably required for its formation and the maturation of rRNAs. Plays a role in bone development. This chain is Large ribosomal subunit protein eL13 (RPL13), found in Homo sapiens (Human).